We begin with the raw amino-acid sequence, 71 residues long: Small ribosomal subunit protein bS21 (71 aa).

A disordered region spans residues 43-71 (TERKRAKASAVKRHAKKLARENARRTRLY). Over residues 46 to 59 (KRAKASAVKRHAKK) the composition is skewed to basic residues. The span at 60-71 (LARENARRTRLY) shows a compositional bias: basic and acidic residues.

Belongs to the bacterial ribosomal protein bS21 family.

The protein is Small ribosomal subunit protein bS21 of Edwardsiella ictaluri (strain 93-146).